We begin with the raw amino-acid sequence, 638 residues long: MRRFSTIVDLLISKKPSSQANSRIDLICKRFHISRVLNNDFVESTERKNGVGLVCPEKHEDEFAGEVEKIYRILRNHHSRVPKLELALNESGIDLRPGLIIRVLSRCGDAGNLGYRFFLWATKQPGYFHSYEVCKSMVMILSKMRQFGAVWGLIEEMRKTNPELIEPELFVVLMRRFASANMVKKAVEVLDEMPKYGLEPDEYVFGCLLDALCKNGSVKEASKVFEDMREKFPPNLRYFTSLLYGWCREGKLMEAKEVLVQMKEAGLEPDIVVFTNLLSGYAHAGKMADAYDLMNDMRKRGFEPNVNCYTVLIQALCRTEKRMDEAMRVFVEMERYGCEADIVTYTALISGFCKWGMIDKGYSVLDDMRKKGVMPSQVTYMQIMVAHEKKEQFEECLELIEKMKRRGCHPDLLIYNVVIRLACKLGEVKEAVRLWNEMEANGLSPGVDTFVIMINGFTSQGFLIEACNHFKEMVSRGIFSAPQYGTLKSLLNNLVRDDKLEMAKDVWSCISNKTSSCELNVSAWTIWIHALYAKGHVKEACSYCLDMMEMDLMPQPNTYAKLMKGLNKLYNRTIAAEITEKVVKMASEREMSFKMYKKKGEEDLIEKAKPKGNKEGKKKGTDHQRYKGRGERSRAKAL.

PPR repeat units lie at residues 130 to 164 (SYEV…NPEL), 166 to 200 (EPEL…GLEP), 201 to 231 (DEYV…MREK), 235 to 269 (NLRY…GLEP), 270 to 304 (DIVV…GFEP), 305 to 340 (NVNC…GCEA), 341 to 375 (DIVT…GVMP), 376 to 410 (SQVT…GCHP), 411 to 445 (DLLI…GLSP), 446 to 480 (GVDT…GIFS), 483 to 513 (QYGT…ISNK), and 520 to 554 (NVSA…DLMP). A disordered region spans residues 604 to 638 (LIEKAKPKGNKEGKKKGTDHQRYKGRGERSRAKAL).

It belongs to the PPR family. P subfamily.

This chain is Pentatricopeptide repeat-containing protein At3g49730, found in Arabidopsis thaliana (Mouse-ear cress).